The following is a 1007-amino-acid chain: Probable beta-galactosidase A (1007 aa).

Positions 1–18 are cleaved as a signal peptide; the sequence is MKLSSACAIALLAAQAAG. Positions 96, 140, 141, and 142 each coordinate substrate. N-linked (GlcNAc...) asparagine glycosylation occurs at Asn156. Asn199 provides a ligand contact to substrate. Glu200 functions as the Proton donor in the catalytic mechanism. Cys205 and Cys206 form a disulfide bridge. A substrate-binding site is contributed by Tyr260. Cys266 and Cys315 are disulfide-bonded. Glu298 (nucleophile) is an active-site residue. Tyr364 lines the substrate pocket. Asn373, Asn402, Asn422, Asn478, Asn522, Asn622, Asn739, Asn760, Asn777, and Asn805 each carry an N-linked (GlcNAc...) asparagine glycan. The interval 862–881 is disordered; sequence RQGFHQPEPPSQDWKSSSPL. Residue Asn914 is glycosylated (N-linked (GlcNAc...) asparagine).

Belongs to the glycosyl hydrolase 35 family.

It localises to the secreted. It catalyses the reaction Hydrolysis of terminal non-reducing beta-D-galactose residues in beta-D-galactosides.. Its function is as follows. Cleaves beta-linked terminal galactosyl residues from gangliosides, glycoproteins, and glycosaminoglycans. The polypeptide is Probable beta-galactosidase A (lacA) (Aspergillus phoenicis (Aspergillus saitoi)).